Here is a 91-residue protein sequence, read N- to C-terminus: MTDVMVVLKVFPEGDETDLEKVANELVSKLPEGYKLVRKETEPIAFGLKALVVYVSMPEKTEGGTDTLEELASSIEGVSHAEVVGITRLGF.

Belongs to the EF-1-beta/EF-1-delta family.

Its function is as follows. Promotes the exchange of GDP for GTP in EF-1-alpha/GDP, thus allowing the regeneration of EF-1-alpha/GTP that could then be used to form the ternary complex EF-1-alpha/GTP/AAtRNA. The sequence is that of Elongation factor 1-beta from Metallosphaera sedula (strain ATCC 51363 / DSM 5348 / JCM 9185 / NBRC 15509 / TH2).